Here is a 341-residue protein sequence, read N- to C-terminus: Putative ubiquitin-like-specific protease 1B (341 aa).

Residues His-231, Asp-248, and Cys-300 contribute to the active site.

The protein belongs to the peptidase C48 family.

Protease that catalyzes two essential functions in the SUMO pathway: processing of full-length SUMOs to their mature forms and deconjugation of SUMO from targeted proteins. The protein is Putative ubiquitin-like-specific protease 1B (ULP1B) of Arabidopsis thaliana (Mouse-ear cress).